The sequence spans 250 residues: Probable transcriptional regulatory protein SACE_2018 (250 aa).

It belongs to the TACO1 family.

Its subcellular location is the cytoplasm. The sequence is that of Probable transcriptional regulatory protein SACE_2018 from Saccharopolyspora erythraea (strain ATCC 11635 / DSM 40517 / JCM 4748 / NBRC 13426 / NCIMB 8594 / NRRL 2338).